A 184-amino-acid chain; its full sequence is NADH-quinone oxidoreductase subunit B (184 aa).

4 residues coordinate [4Fe-4S] cluster: Cys63, Cys64, Cys128, and Cys158.

The protein belongs to the complex I 20 kDa subunit family. In terms of assembly, NDH-1 is composed of 14 different subunits. Subunits NuoB, C, D, E, F, and G constitute the peripheral sector of the complex. [4Fe-4S] cluster serves as cofactor.

It localises to the cell inner membrane. It catalyses the reaction a quinone + NADH + 5 H(+)(in) = a quinol + NAD(+) + 4 H(+)(out). Its function is as follows. NDH-1 shuttles electrons from NADH, via FMN and iron-sulfur (Fe-S) centers, to quinones in the respiratory chain. Couples the redox reaction to proton translocation (for every two electrons transferred, four hydrogen ions are translocated across the cytoplasmic membrane), and thus conserves the redox energy in a proton gradient. The chain is NADH-quinone oxidoreductase subunit B from Xanthomonas campestris pv. campestris (strain 8004).